A 348-amino-acid polypeptide reads, in one-letter code: Tetraacyldisaccharide 4'-kinase (348 aa).

65–72 (VAGGAGKT) contacts ATP. The disordered stretch occupies residues 89-117 (PGIVSRGHGSREREARPVSADSTAQSVGD).

The protein belongs to the LpxK family.

The enzyme catalyses a lipid A disaccharide + ATP = a lipid IVA + ADP + H(+). The protein operates within glycolipid biosynthesis; lipid IV(A) biosynthesis; lipid IV(A) from (3R)-3-hydroxytetradecanoyl-[acyl-carrier-protein] and UDP-N-acetyl-alpha-D-glucosamine: step 6/6. Transfers the gamma-phosphate of ATP to the 4'-position of a tetraacyldisaccharide 1-phosphate intermediate (termed DS-1-P) to form tetraacyldisaccharide 1,4'-bis-phosphate (lipid IVA). The protein is Tetraacyldisaccharide 4'-kinase of Leptothrix cholodnii (strain ATCC 51168 / LMG 8142 / SP-6) (Leptothrix discophora (strain SP-6)).